Reading from the N-terminus, the 526-residue chain is Nucleobase-ascorbate transporter 4 (526 aa).

12 helical membrane passes run 42–62 (IVML…MGGG), 69–89 (VINT…LFGS), 91–111 (LPVV…ITFS), 131–151 (IQGA…FGLW), 157–177 (FLSP…LLAF), 186–206 (IEIG…LPHL), 217–237 (FAVL…TAAG), 282–302 (AFAM…SFIA), 359–381 (RVVQ…GAVL), 388–410 (IFAA…LLQF), 420–440 (FILG…TEYL), and 457–477 (VIMQ…AFLL).

The protein belongs to the nucleobase:cation symporter-2 (NCS2) (TC 2.A.40) family. In terms of tissue distribution, highly expressed in the root central cylinder. Expressed in the filaments and stigmatic papillae of pollinated flowers and developing siliques.

The protein resides in the membrane. This chain is Nucleobase-ascorbate transporter 4 (NAT4), found in Arabidopsis thaliana (Mouse-ear cress).